The primary structure comprises 127 residues: Aspartate 1-decarboxylase (127 aa).

The Schiff-base intermediate with substrate; via pyruvic acid role is filled by Ser-25. Pyruvic acid (Ser) is present on Ser-25. Thr-57 provides a ligand contact to substrate. Tyr-58 acts as the Proton donor in catalysis. Gly-73 to Ala-75 contacts substrate.

The protein belongs to the PanD family. As to quaternary structure, heterooctamer of four alpha and four beta subunits. The cofactor is pyruvate. Post-translationally, is synthesized initially as an inactive proenzyme, which is activated by self-cleavage at a specific serine bond to produce a beta-subunit with a hydroxyl group at its C-terminus and an alpha-subunit with a pyruvoyl group at its N-terminus.

Its subcellular location is the cytoplasm. It carries out the reaction L-aspartate + H(+) = beta-alanine + CO2. It participates in cofactor biosynthesis; (R)-pantothenate biosynthesis; beta-alanine from L-aspartate: step 1/1. Functionally, catalyzes the pyruvoyl-dependent decarboxylation of aspartate to produce beta-alanine. In Neisseria meningitidis serogroup A / serotype 4A (strain DSM 15465 / Z2491), this protein is Aspartate 1-decarboxylase.